Consider the following 278-residue polypeptide: MAEALRRVLNAGCAARPGEDGAAGPPLLLLGAPRSAQTSLLFAAALEAAGEGRGSVLFVTRRPLQSLPLSTPTAREHWRLQKVRFQYPSSIQELLQLLASAHEAPAPTPSLLLLDGLEEYLAEDPSAQEAAYLAALLLDTAAFFSHRLGANGSCGLVVALETQKEAEADAPHLPLLKRYFPAQCWLQPDALGLGQHCCLRASLELGKLSPRTEWSVSFLPCGEMKVTPWLAQASKLSPEKKDSSAGSQSLTLGCDNLPGPGSPLDGILTSETGADSKT.

The disordered stretch occupies residues 237–278; the sequence is SPEKKDSSAGSQSLTLGCDNLPGPGSPLDGILTSETGADSKT. The span at 269–278 shows a compositional bias: polar residues; that stretch reads TSETGADSKT.

As to quaternary structure, interacts with ZSWIM7; they form a functional complex involved in homologous recombination repair and stabilize each other. Interacts with RAD51, RAD51B, RAD51C, RAD51D and XRCC3; involved in homologous recombination repair.

The protein resides in the nucleus. Its function is as follows. ATPase which is preferentially stimulated by single-stranded DNA and is involved in homologous recombination repair (HRR). Has a DNA-binding activity which is independent of its ATPase activity. In Mus musculus (Mouse), this protein is ATPase SWSAP1 (Swsap1).